The sequence spans 152 residues: Transcriptional regulator MraZ (152 aa).

SpoVT-AbrB domains lie at 5–52 and 81–124; these read AHAI…PLCE and ASEC…SETR.

The protein belongs to the MraZ family. In terms of assembly, forms oligomers.

It localises to the cytoplasm. Its subcellular location is the nucleoid. This Tolumonas auensis (strain DSM 9187 / NBRC 110442 / TA 4) protein is Transcriptional regulator MraZ.